The following is a 224-amino-acid chain: Thylakoid lumenal 15 kDa protein 1, chloroplastic (224 aa).

The N-terminal 34 residues, 1–34 (MVILSNVSLFSCCNISQKPSLFSPSSRSSHCPIR), are a transit peptide targeting the chloroplast. The N-terminal 47 residues, 35 to 81 (CSQSQEGKEVVTSPLRSVVWSLGEEVSKRSLFALVSASLFFVDPALA), are a transit peptide targeting the thylakoid. Pentapeptide repeat domains follow at residues 116–155 (SILR…DFSL) and 156–196 (ANVT…PLRD).

The protein resides in the plastid. It localises to the chloroplast thylakoid lumen. The chain is Thylakoid lumenal 15 kDa protein 1, chloroplastic from Arabidopsis thaliana (Mouse-ear cress).